A 168-amino-acid polypeptide reads, in one-letter code: Small ribosomal subunit protein uS5 (168 aa).

The S5 DRBM domain occupies tyrosine 12–isoleucine 75.

This sequence belongs to the universal ribosomal protein uS5 family. As to quaternary structure, part of the 30S ribosomal subunit. Contacts proteins S4 and S8.

With S4 and S12 plays an important role in translational accuracy. In terms of biological role, located at the back of the 30S subunit body where it stabilizes the conformation of the head with respect to the body. The protein is Small ribosomal subunit protein uS5 of Legionella pneumophila (strain Paris).